Consider the following 363-residue polypeptide: Dihydroorotate dehydrogenase (quinone) (363 aa).

Residues 67–71 (AGFDK) and T91 each bind FMN. Position 71 (K71) interacts with substrate. Substrate is bound at residue 116-120 (NRMGF). FMN is bound by residues N156 and N189. A substrate-binding site is contributed by N189. The Nucleophile role is filled by S192. N194 contributes to the substrate binding site. 2 residues coordinate FMN: K231 and T259. Position 260 to 261 (260 to 261 (NT)) interacts with substrate. Residues G287, G316, and 337–338 (YT) contribute to the FMN site.

The protein belongs to the dihydroorotate dehydrogenase family. Type 2 subfamily. Monomer. FMN is required as a cofactor.

It localises to the cell membrane. The enzyme catalyses (S)-dihydroorotate + a quinone = orotate + a quinol. It participates in pyrimidine metabolism; UMP biosynthesis via de novo pathway; orotate from (S)-dihydroorotate (quinone route): step 1/1. In terms of biological role, catalyzes the conversion of dihydroorotate to orotate with quinone as electron acceptor. The polypeptide is Dihydroorotate dehydrogenase (quinone) (Kocuria rhizophila (strain ATCC 9341 / DSM 348 / NBRC 103217 / DC2201)).